A 187-amino-acid chain; its full sequence is Large ribosomal subunit protein uL5 (187 aa).

It belongs to the universal ribosomal protein uL5 family. As to quaternary structure, part of the 50S ribosomal subunit; part of the 5S rRNA/L5/L18/L25 subcomplex. Contacts the 5S rRNA and the P site tRNA. Forms a bridge to the 30S subunit in the 70S ribosome.

Its function is as follows. This is one of the proteins that bind and probably mediate the attachment of the 5S RNA into the large ribosomal subunit, where it forms part of the central protuberance. In the 70S ribosome it contacts protein S13 of the 30S subunit (bridge B1b), connecting the 2 subunits; this bridge is implicated in subunit movement. Contacts the P site tRNA; the 5S rRNA and some of its associated proteins might help stabilize positioning of ribosome-bound tRNAs. The chain is Large ribosomal subunit protein uL5 from Corynebacterium diphtheriae (strain ATCC 700971 / NCTC 13129 / Biotype gravis).